The primary structure comprises 149 residues: Large ribosomal subunit protein bL9 (149 aa).

The protein belongs to the bacterial ribosomal protein bL9 family.

In terms of biological role, binds to the 23S rRNA. In Endomicrobium trichonymphae, this protein is Large ribosomal subunit protein bL9.